The sequence spans 920 residues: KIN14B-interacting protein At4g14310 (920 aa).

Positions 1–10 (MSASTNRRRL) are enriched in basic residues. Disordered regions lie at residues 1-199 (MSAS…EKST) and 309-375 (IDGP…EKPS). Residues 35–54 (PISSKNSNPALQKSLSSKEN) show a composition bias toward polar residues. Residues 90–105 (TRSTSSGLRGRSSSPS) show a composition bias toward low complexity. Residues 112-135 (SDLRKRNESRVIGEKGESGQDKKS) are compositionally biased toward basic and acidic residues. 2 stretches are compositionally biased toward polar residues: residues 137-147 (LKSSGFKQGTS) and 166-184 (CPVN…NSIS). Basic and acidic residues predominate over residues 327-337 (LNKEELEDRLL). Over residues 345 to 355 (SRTQSKTSSHV) the composition is skewed to polar residues. The segment covering 357 to 374 (KGHDSVESNKAVNAEEKP) has biased composition (basic and acidic residues). A coiled-coil region spans residues 435–463 (TEILRANEALEEIDDEENREEMELEEIDD).

As to quaternary structure, interacts with KIN14B, CDKA-1, CKS1 and CKS2.

The protein localises to the cytoplasm. Might be involved in division plane determination. This chain is KIN14B-interacting protein At4g14310, found in Arabidopsis thaliana (Mouse-ear cress).